A 257-amino-acid chain; its full sequence is Diacetyl reductase [(S)-acetoin forming] (257 aa).

6-30 (IITGSAGGLGKGIAERLANDGFNIV) contacts NAD(+). Serine 139 provides a ligand contact to substrate. Catalysis depends on tyrosine 152, which acts as the Proton acceptor. Residue lysine 156 is part of the active site.

Belongs to the short-chain dehydrogenases/reductases (SDR) family.

It carries out the reaction (S)-acetoin + NAD(+) = diacetyl + NADH + H(+). In terms of biological role, catalyzes the irreversible reduction of 2,3-butanediol to (S)-acetoin in the presence of NADH. The protein is Diacetyl reductase [(S)-acetoin forming] (butA) of Staphylococcus epidermidis (strain ATCC 35984 / DSM 28319 / BCRC 17069 / CCUG 31568 / BM 3577 / RP62A).